A 229-amino-acid polypeptide reads, in one-letter code: Glutathione S-transferase 1 (229 aa).

The region spanning 2 to 83 (SPVKVFGHPM…YILRKYGGTA (82 aa)) is the GST N-terminal domain. Residues 41–42 (HK), 54–55 (KM), and 67–68 (ES) each bind glutathione. A GST C-terminal domain is found at 93-223 (GIEELAMVDV…RVCKHMPTEF (131 aa)).

This sequence belongs to the GST superfamily. Phi family.

The enzyme catalyses RX + glutathione = an S-substituted glutathione + a halide anion + H(+). Conjugation of reduced glutathione to a wide number of exogenous and endogenous hydrophobic electrophiles. The chain is Glutathione S-transferase 1 (GSTA1) from Triticum aestivum (Wheat).